We begin with the raw amino-acid sequence, 141 residues long: Large ribosomal subunit protein bL17 (141 aa).

This sequence belongs to the bacterial ribosomal protein bL17 family. Part of the 50S ribosomal subunit. Contacts protein L32.

The protein is Large ribosomal subunit protein bL17 of Rhizobium meliloti (strain 1021) (Ensifer meliloti).